The chain runs to 68 residues: Large ribosomal subunit protein bL32 (68 aa).

This sequence belongs to the bacterial ribosomal protein bL32 family.

The sequence is that of Large ribosomal subunit protein bL32 from Ruegeria pomeroyi (strain ATCC 700808 / DSM 15171 / DSS-3) (Silicibacter pomeroyi).